Consider the following 152-residue polypeptide: Protein NrdI (152 aa).

It belongs to the NrdI family.

In terms of biological role, probably involved in ribonucleotide reductase function. This Mycobacterium sp. (strain JLS) protein is Protein NrdI.